Reading from the N-terminus, the 488-residue chain is Probable malate:quinone oxidoreductase (488 aa).

The protein belongs to the MQO family. The cofactor is FAD.

It carries out the reaction (S)-malate + a quinone = a quinol + oxaloacetate. It participates in carbohydrate metabolism; tricarboxylic acid cycle; oxaloacetate from (S)-malate (quinone route): step 1/1. This is Probable malate:quinone oxidoreductase from Neisseria meningitidis serogroup C (strain 053442).